The primary structure comprises 88 residues: Small ribosomal subunit protein uS15c (88 aa).

The protein belongs to the universal ribosomal protein uS15 family. Part of the 30S ribosomal subunit.

Its subcellular location is the plastid. The protein resides in the chloroplast. In Pinus koraiensis (Korean pine), this protein is Small ribosomal subunit protein uS15c (rps15).